The primary structure comprises 305 residues: tRNA dimethylallyltransferase (305 aa).

8-15 (GPTAVGKT) is a binding site for ATP. 10 to 15 (TAVGKT) provides a ligand contact to substrate. The segment at 33–36 (DSRQ) is interaction with substrate tRNA.

This sequence belongs to the IPP transferase family. As to quaternary structure, monomer. The cofactor is Mg(2+).

The catalysed reaction is adenosine(37) in tRNA + dimethylallyl diphosphate = N(6)-dimethylallyladenosine(37) in tRNA + diphosphate. Functionally, catalyzes the transfer of a dimethylallyl group onto the adenine at position 37 in tRNAs that read codons beginning with uridine, leading to the formation of N6-(dimethylallyl)adenosine (i(6)A). This Thermotoga petrophila (strain ATCC BAA-488 / DSM 13995 / JCM 10881 / RKU-1) protein is tRNA dimethylallyltransferase.